Consider the following 148-residue polypeptide: 3-dehydroquinate dehydratase (148 aa).

Tyr24 serves as the catalytic Proton acceptor. Substrate contacts are provided by Asn75, His81, and Asp88. The active-site Proton donor is His101. Substrate-binding positions include 102 to 103 (LS) and Arg112.

It belongs to the type-II 3-dehydroquinase family. Homododecamer.

It catalyses the reaction 3-dehydroquinate = 3-dehydroshikimate + H2O. It participates in metabolic intermediate biosynthesis; chorismate biosynthesis; chorismate from D-erythrose 4-phosphate and phosphoenolpyruvate: step 3/7. Catalyzes a trans-dehydration via an enolate intermediate. This is 3-dehydroquinate dehydratase from Rhizobium meliloti (strain 1021) (Ensifer meliloti).